The chain runs to 307 residues: Porphobilinogen deaminase (307 aa).

Cys241 is modified (S-(dipyrrolylmethanemethyl)cysteine).

Belongs to the HMBS family. Monomer. Requires dipyrromethane as cofactor.

The catalysed reaction is 4 porphobilinogen + H2O = hydroxymethylbilane + 4 NH4(+). It functions in the pathway porphyrin-containing compound metabolism; protoporphyrin-IX biosynthesis; coproporphyrinogen-III from 5-aminolevulinate: step 2/4. Tetrapolymerization of the monopyrrole PBG into the hydroxymethylbilane pre-uroporphyrinogen in several discrete steps. This is Porphobilinogen deaminase from Coxiella burnetii (strain CbuG_Q212) (Coxiella burnetii (strain Q212)).